The following is a 321-amino-acid chain: Glucokinase (321 aa).

Residue 10–15 coordinates ATP; it reads GDIGGT.

It belongs to the bacterial glucokinase family.

It is found in the cytoplasm. It catalyses the reaction D-glucose + ATP = D-glucose 6-phosphate + ADP + H(+). The protein is Glucokinase of Marinobacter nauticus (strain ATCC 700491 / DSM 11845 / VT8) (Marinobacter aquaeolei).